Consider the following 444-residue polypeptide: Killer cell immunoglobulin-like receptor 3DL1 (444 aa).

The signal sequence occupies residues 1-21; the sequence is MSLMVVSMACVGLFLVQRAGP. Over 22 to 340 the chain is Extracellular; that stretch reads HMGGQDKPFL…SKSGNPRHLH (319 aa). Ig-like C2-type domains are found at residues 42–102, 137–202, and 237–300; these read GGHV…HPHS, GERV…VTHT, and GESV…FRHS. Intrachain disulfides connect Cys49–Cys95, Cys144–Cys195, and Cys244–Cys293. N-linked (GlcNAc...) asparagine glycans are attached at residues Asn92, Asn179, and Asn273. The segment at 315–334 is disordered; it reads VTGNPSSSWPSPTEPSSKSG. Low complexity predominate over residues 319–333; that stretch reads PSSSWPSPTEPSSKS. The helical transmembrane segment at 341–360 threads the bilayer; that stretch reads ILIGTSVVIILFILLLFFLL. The Cytoplasmic segment spans residues 361 to 444; sequence HLWCSNKKNA…KPRSKVVSCP (84 aa). 2 disordered regions span residues 375–394 and 409–444; these read QEPA…QDPE and RKIT…VSCP.

The protein belongs to the immunoglobulin superfamily.

The protein localises to the cell membrane. Its function is as follows. Receptor on natural killer (NK) cells for HLA Bw4 allele. Inhibits the activity of NK cells thus preventing cell lysis. The chain is Killer cell immunoglobulin-like receptor 3DL1 from Homo sapiens (Human).